The following is a 121-amino-acid chain: ATP synthase epsilon chain (121 aa).

This sequence belongs to the ATPase epsilon chain family. As to quaternary structure, F-type ATPases have 2 components, CF(1) - the catalytic core - and CF(0) - the membrane proton channel. CF(1) has five subunits: alpha(3), beta(3), gamma(1), delta(1), epsilon(1). CF(0) has three main subunits: a, b and c.

It is found in the cell membrane. Functionally, produces ATP from ADP in the presence of a proton gradient across the membrane. The chain is ATP synthase epsilon chain from Mycobacterium sp. (strain JLS).